The following is a 1147-amino-acid chain: Tip elongation aberrant protein 1 (1147 aa).

Positions 1 to 16 are enriched in basic residues; sequence MSFLFKRNKGSAHKPT. Residues 1-64 form a disordered region; the sequence is MSFLFKRNKG…TGSGSHITAS (64 aa). Positions 18 to 32 are enriched in polar residues; sequence PNFSKTSTTPSTSQL. 6 Kelch repeats span residues 94-144, 146-198, 199-253, 254-303, 305-351, and 355-402; these read EIYI…LIGN, FIVF…CLGS, KICL…TFSD, KLYI…VVEG, LYVF…TLSC, and TLVL…SNST. 2 disordered regions span residues 384 to 403 and 408 to 547; these read SVPTTSGRQRNTSFFSNSTG and SAFN…NAQS. 3 stretches are compositionally biased toward polar residues: residues 385–403, 408–465, and 472–489; these read VPTTSGRQRNTSFFSNSTG, SAFN…SNDL, and TRSNSSSILQPSYNLNSH. A compositionally biased stretch (low complexity) spans 502 to 512; it reads SSLNSQQLSNQ. S503 carries the phosphoserine modification. Polar residues predominate over residues 519 to 547; sequence VSPTLSFVPSSHSMEQGNGSVASANNAQS. An interaction with tea4 region spans residues 538 to 1147; it reads SVASANNAQS…AKEPVHDNEN (610 aa). Coiled coils occupy residues 611 to 649, 716 to 838, 879 to 990, and 1084 to 1105; these read KLYEILRDSASKIDSLTEKLKVANAEKNAALCEAALEKV, QTSS…IIDA, KNNE…ALEE, and IKSLSDSVMLLKNQIDDLAKEK. Positions 948 to 1147 are retention at microtubule cell ends; it reads KALEQRNTGA…AKEPVHDNEN (200 aa).

As to quaternary structure, major component of the tea1 cell-end complex. Interacts with rax2, tea4 and tip1. Interacts with for3 in the presence of tea4.

It is found in the cytoplasm. It localises to the cytoskeleton. Its function is as follows. Cell polarity protein. Acts as an end marker, directing the growth machinery to the cell poles. Involved in the regulation of microtubular organization, affecting the maintenance of a single central axis. Prevents the curling of microtubule tips around the cell ends and is required for the retention of polarity factors such as pom1, tip1 and tea2 at the cell ends, necessary for the cell to grow in a straight line. Links tip1 and tea4 in a common complex. The chain is Tip elongation aberrant protein 1 (tea1) from Schizosaccharomyces pombe (strain 972 / ATCC 24843) (Fission yeast).